Here is a 774-residue protein sequence, read N- to C-terminus: Multiple C2 domain and transmembrane region protein 11 (774 aa).

Positions 1–12 (MAVNGTGNGTGD) are enriched in gly residues. The segment at 1 to 30 (MAVNGTGNGTGDGDFSLKETSPNIGNGGVN) is disordered. C2 domains lie at 9–145 (GTGD…PQWY), 184–307 (VTGE…SLWY), and 338–471 (LDES…THSY). Residues Asp-62, Asn-110, Asp-112, and Asp-118 each contribute to the Ca(2+) site. Helical transmembrane passes span 608–628 (LFVVFLPKYCVFSMLLYCFVF) and 722–742 (FVSCGVICFVSMKLLLTFLAF).

This sequence belongs to the MCTP family. It depends on Ca(2+) as a cofactor. Observed in flowers.

The protein localises to the endoplasmic reticulum membrane. Functionally, may function as a signaling molecule by regulating the trafficking of other regulators. In Arabidopsis thaliana (Mouse-ear cress), this protein is Multiple C2 domain and transmembrane region protein 11.